A 126-amino-acid chain; its full sequence is Urease subunit beta (126 aa).

It belongs to the urease beta subunit family. Heterotrimer of UreA (gamma), UreB (beta) and UreC (alpha) subunits. Three heterotrimers associate to form the active enzyme.

It localises to the cytoplasm. The enzyme catalyses urea + 2 H2O + H(+) = hydrogencarbonate + 2 NH4(+). The protein operates within nitrogen metabolism; urea degradation; CO(2) and NH(3) from urea (urease route): step 1/1. This is Urease subunit beta from Haloquadratum walsbyi (strain DSM 16790 / HBSQ001).